The following is a 354-amino-acid chain: Uroporphyrinogen decarboxylase (354 aa).

Residues 30-34 (RQAGR), phenylalanine 49, aspartate 79, tyrosine 156, serine 211, and histidine 326 each bind substrate.

Belongs to the uroporphyrinogen decarboxylase family. Homodimer.

It is found in the cytoplasm. The enzyme catalyses uroporphyrinogen III + 4 H(+) = coproporphyrinogen III + 4 CO2. It functions in the pathway porphyrin-containing compound metabolism; protoporphyrin-IX biosynthesis; coproporphyrinogen-III from 5-aminolevulinate: step 4/4. Functionally, catalyzes the decarboxylation of four acetate groups of uroporphyrinogen-III to yield coproporphyrinogen-III. The protein is Uroporphyrinogen decarboxylase of Salinibacter ruber (strain DSM 13855 / M31).